Reading from the N-terminus, the 412-residue chain is Serine hydroxymethyltransferase (412 aa).

(6S)-5,6,7,8-tetrahydrofolate contacts are provided by residues Leu-120 and 124–126 (GHL). Lys-229 carries the post-translational modification N6-(pyridoxal phosphate)lysine. 352–354 (SPF) serves as a coordination point for (6S)-5,6,7,8-tetrahydrofolate.

Belongs to the SHMT family. As to quaternary structure, homodimer. Requires pyridoxal 5'-phosphate as cofactor.

Its subcellular location is the cytoplasm. It catalyses the reaction (6R)-5,10-methylene-5,6,7,8-tetrahydrofolate + glycine + H2O = (6S)-5,6,7,8-tetrahydrofolate + L-serine. It participates in one-carbon metabolism; tetrahydrofolate interconversion. It functions in the pathway amino-acid biosynthesis; glycine biosynthesis; glycine from L-serine: step 1/1. Functionally, catalyzes the reversible interconversion of serine and glycine with tetrahydrofolate (THF) serving as the one-carbon carrier. This reaction serves as the major source of one-carbon groups required for the biosynthesis of purines, thymidylate, methionine, and other important biomolecules. Also exhibits THF-independent aldolase activity toward beta-hydroxyamino acids, producing glycine and aldehydes, via a retro-aldol mechanism. The polypeptide is Serine hydroxymethyltransferase (Acetivibrio thermocellus (strain ATCC 27405 / DSM 1237 / JCM 9322 / NBRC 103400 / NCIMB 10682 / NRRL B-4536 / VPI 7372) (Clostridium thermocellum)).